The following is a 444-amino-acid chain: Exodeoxyribonuclease 7 large subunit (444 aa).

The protein belongs to the XseA family. Heterooligomer composed of large and small subunits.

It is found in the cytoplasm. The catalysed reaction is Exonucleolytic cleavage in either 5'- to 3'- or 3'- to 5'-direction to yield nucleoside 5'-phosphates.. Functionally, bidirectionally degrades single-stranded DNA into large acid-insoluble oligonucleotides, which are then degraded further into small acid-soluble oligonucleotides. The sequence is that of Exodeoxyribonuclease 7 large subunit from Aliivibrio salmonicida (strain LFI1238) (Vibrio salmonicida (strain LFI1238)).